The chain runs to 1022 residues: GPI ethanolamine phosphate transferase 1 (1022 aa).

Residues 1 to 6 (MARVGR) are Cytoplasmic-facing. A helical transmembrane segment spans residues 7-27 (VGFLTLAVVFHLMYAYSIFDI). Residues 28–466 (YFVSPIVSGM…LQTYDWLFLR (439 aa)) lie on the Lumenal side of the membrane. Asparagine 148 and asparagine 433 each carry an N-linked (GlcNAc...) asparagine glycan. Residues 467-487 (TIVSLGYLGWIAYALTTVIDL) traverse the membrane as a helical segment. At 488-498 (HVLHGKSESNR) the chain is on the cytoplasmic side. A helical membrane pass occupies residues 499 to 519 (TTFSIMFFSSILVALFSVLLY). Topologically, residues 520–560 (QGSSWRYYLYALFPIFFWEEVFARRKALLAGREILLGHVHS) are lumenal. Residues 561 to 581 (VSGYFAFAIQLLLYVGVLEAL) traverse the membrane as a helical segment. The Cytoplasmic portion of the chain corresponds to 582 to 589 (VQSYFHRD). A helical transmembrane segment spans residues 590-610 (IFTVCFILGGFWPITYGTKFL). Residues 611 to 614 (GQHK) are Lumenal-facing. The chain crosses the membrane as a helical span at residues 615–635 (LLSASWALGCFLMSIFTLLPA). The Cytoplasmic segment spans residues 636 to 640 (NKVED). A helical membrane pass occupies residues 641-661 (MMMISCGSLLMFLTGLLYLIF). At 662–685 (ERSILGQKRSSDPNSVVSSCGSRT) the chain is on the lumenal side. A helical transmembrane segment spans residues 686–706 (IMGAQVGMILLALIVTRSSVA). Residues 707–713 (SLQAKQG) lie on the Cytoplasmic side of the membrane. Residues 714 to 734 (LPLGNQVLGWAILVSSLLLPF) traverse the membrane as a helical segment. The Lumenal segment spans residues 735 to 749 (LHRLYPNSHYLHRLM). Helical transmembrane passes span 750 to 770 (VIFLTFSPIFIILTISYEGLF) and 771 to 791 (YFVFCMTLLAWVRLEQAIYIH). Residues 792-837 (TTAPTREQDHSVANGSLPAKKPSPGNTVVVEGQPYRYRTLSVSDAR) lie on the Lumenal side of the membrane. N-linked (GlcNAc...) asparagine glycosylation occurs at asparagine 805. The chain crosses the membrane as a helical span at residues 838 to 858 (VALFFFFLLQSGFFSTGNIAS). Topologically, residues 859–880 (VSSFSLDSVYRLIPIFNPFAQG) are cytoplasmic. Residues 881 to 901 (ALLILKLLIPFAIISANLGIL) form a helical membrane-spanning segment. Topologically, residues 902 to 910 (NHRLEVAPS) are lumenal. Residues 911–931 (ALFMVVMSISDVMTLNFFYMV) traverse the membrane as a helical segment. Over 932 to 947 (RDEGSWLEIGTTISHF) the chain is Cytoplasmic. A helical transmembrane segment spans residues 948 to 968 (CIASFLCTFVAVLEFLSELFI). Topologically, residues 969–1022 (SGVDFGHPATTVGSAVAKAVNGSVACGHSPDSDISGEDSTSVGITAKADPDARS) are lumenal. Asparagine 989 carries N-linked (GlcNAc...) asparagine glycosylation. The segment at 998-1022 (PDSDISGEDSTSVGITAKADPDARS) is disordered.

Belongs to the PIGG/PIGN/PIGO family. PIGN subfamily.

Its subcellular location is the endoplasmic reticulum membrane. It participates in glycolipid biosynthesis; glycosylphosphatidylinositol-anchor biosynthesis. Functionally, ethanolamine phosphate transferase involved in glycosylphosphatidylinositol-anchor biosynthesis. Transfers ethanolamine phosphate to the first alpha-1,4-linked mannose of the glycosylphosphatidylinositol precursor of GPI-anchor. In Aspergillus oryzae (strain ATCC 42149 / RIB 40) (Yellow koji mold), this protein is GPI ethanolamine phosphate transferase 1 (mcd4).